The sequence spans 41 residues: Large ribosomal subunit protein bL36 (41 aa).

The protein belongs to the bacterial ribosomal protein bL36 family.

In Rhodopseudomonas palustris (strain BisB18), this protein is Large ribosomal subunit protein bL36.